A 942-amino-acid chain; its full sequence is UvrABC system protein A (942 aa).

Residue 32 to 39 (GLSGSGKS) coordinates ATP. Residues 251–278 (CPVCGFTVPELEPRLFSFNAPFGSCPTC) form a C4-type zinc finger. 2 consecutive ABC transporter domains span residues 308 to 589 (WNPI…KKSI) and 609 to 937 (GNGR…HYLK). 641–648 (GVSGSGKS) is an ATP binding site. The C4-type zinc-finger motif lies at 740–766 (CEACSGDGIIKIEMHFLPDVYVPCEVC).

It belongs to the ABC transporter superfamily. UvrA family. In terms of assembly, forms a heterotetramer with UvrB during the search for lesions.

It is found in the cytoplasm. The UvrABC repair system catalyzes the recognition and processing of DNA lesions. UvrA is an ATPase and a DNA-binding protein. A damage recognition complex composed of 2 UvrA and 2 UvrB subunits scans DNA for abnormalities. When the presence of a lesion has been verified by UvrB, the UvrA molecules dissociate. This is UvrABC system protein A from Streptococcus pyogenes serotype M1.